The primary structure comprises 927 residues: Nuclear factor of activated T-cells, cytoplasmic 2 (927 aa).

The segment at methionine 1–aspartate 29 is disordered. 7 positions are modified to phosphoserine: serine 23, serine 53, serine 54, serine 56, serine 99, serine 107, and serine 110. Positions proline 111 to threonine 116 are calcineurin-binding. The segment at histidine 119–aspartate 201 is transactivation domain A (TAD-A). Phosphoserine is present on residues serine 136, serine 150, serine 170, serine 173, serine 174, serine 176, serine 177, serine 179, and serine 182. The interval tyrosine 163–serine 177 is required for cytoplasmic retention of the phosphorylated form. Tandem repeats lie at residues serine 186–aspartate 202 and serine 215–aspartate 231. The interval serine 186–isoleucine 292 is 3 X approximate SP repeats. 2 disordered regions span residues leucine 203–threonine 299 and serine 322–alanine 341. Phosphoserine is present on residues serine 215, serine 219, serine 223, serine 238, and serine 245. A compositionally biased stretch (polar residues) spans proline 216–threonine 226. Residues lysine 253–arginine 255 carry the Nuclear localization signal motif. A phosphoserine mark is found at serine 257, serine 270, serine 276, serine 278, serine 282, serine 328, and serine 365. The span at proline 267–proline 277 shows a compositional bias: low complexity. The stretch at serine 274–aspartate 290 is one 3; approximate repeat. The RHD domain occupies alanine 394–alanine 576. A DNA-binding region spans residues arginine 423 to glycine 430. Serine 757, serine 759, and serine 761 each carry phosphoserine. Disordered regions lie at residues alanine 790–serine 812 and phenylalanine 841–aspartate 903. Polar residues predominate over residues glycine 798–serine 812. Serine 860 is modified (phosphoserine).

As to quaternary structure, member of the multicomponent NFATC transcription complex that consists of at least two components, a pre-existing cytoplasmic component NFATC2 and an inducible nuclear component NFATC1. Other members such as NFATC4, NFATC3 or members of the activating protein-1 family, MAF, GATA4 and Cbp/p300 can also bind the complex. The phosphorylated form specifically interacts with XPO1; which mediates nuclear export. NFATC proteins bind to DNA as monomers. Interacts with NFATC2IP. Interacts with FOXP3. Interacts with TBX21 ('Thr-302' phosphorylated form). Interacts with KAT2A. Interacts with HOMER2 and HOMER3; this interaction competes with calcineurin/PPP3CA-binding and hence prevents NFATC2 dephosphorylation and activation. Interacts with protein phosphatase PPP3CA/calcineurin A. Interacts with AKAP5 (via leucine zipper domain); this is required for NFATC2/NFAT1 recruitment to CRAC channels. In terms of processing, in resting cells, phosphorylated by NFATC-kinase on at least 18 sites in the 99-365 region. Upon cell stimulation, all these sites except Ser-245 are dephosphorylated by calcineurin. Dephosphorylation induces a conformational change that simultaneously exposes an NLS and masks an NES, which results in nuclear localization. Simultaneously, one site among Ser-53; Ser-54 and Ser-56 is phosphorylated; which is required for full transcriptional activity. Post-translationally, ubiquitinated in endothelial cells by RNF213 downstream of the non-canonical Wnt signaling pathway, leading to its degradation by the proteasome. As to expression, expressed in spleen, heart, testis, brain, placenta, muscle and pancreas. Expressed in the thymus. Expressed in the lung. Expressed in cartilage.

The protein resides in the cytoplasm. It is found in the nucleus. Functionally, plays a role in the inducible expression of cytokine genes in T cells, especially in the induction of the IL-2, IL-3, IL-4, TNF-alpha or GM-CSF. Promotes invasive migration through the activation of GPC6 expression and WNT5A signaling pathway. Is involved in the negative regulation of chondrogenesis. Recruited by AKAP5 to ORAI1 pore-forming subunit of CRAC channels in Ca(2+) signaling microdomains where store-operated Ca(2+) influx is coupled to calmodulin and calcineurin signaling and activation of NFAT-dependent transcriptional responses. The sequence is that of Nuclear factor of activated T-cells, cytoplasmic 2 (Nfatc2) from Mus musculus (Mouse).